Consider the following 476-residue polypeptide: NAC domain-containing protein 86 (476 aa).

Positions 6 to 157 (LPPGFRFHPT…AYALCRVFKK (152 aa)) constitute an NAC domain. The DNA-binding element occupies 105–163 (IGTKKTLVYYRGRAPHGIRTGWVMHEYRLDESECEPSAFGMQDAYALCRVFKKIVIEAK).

Expressed in a few sieve element cells before enucleation and in phloem-pole pericycle cells.

The protein localises to the nucleus. Functionally, transcription factor directing sieve element enucleation and cytosol degradation. Not required for formation of lytic vacuoles. Regulates, with NAC045, the transcription of NEN1, NEN2, NEN3, NEN4, RTM1, RTM2, UBP16, PLDZETA, ABCB10 and At1g26450. In Arabidopsis thaliana (Mouse-ear cress), this protein is NAC domain-containing protein 86.